The sequence spans 235 residues: Large ribosomal subunit protein uL1 (235 aa).

The protein belongs to the universal ribosomal protein uL1 family. As to quaternary structure, part of the 50S ribosomal subunit.

Binds directly to 23S rRNA. The L1 stalk is quite mobile in the ribosome, and is involved in E site tRNA release. In terms of biological role, protein L1 is also a translational repressor protein, it controls the translation of the L11 operon by binding to its mRNA. This Prochlorococcus marinus (strain MIT 9303) protein is Large ribosomal subunit protein uL1.